Consider the following 162-residue polypeptide: uncharacterized protein (162 aa).

The segment at 1–49 (MNSRTASARGWFSSRPPTSESDLEPATDGPASETTTLSPEATTFNDTRI) is disordered. The segment covering 32–46 (SETTTLSPEATTFND) has biased composition (polar residues). Residues 62 to 82 (MLLSFGIITVIGLAVALVLYI) traverse the membrane as a helical segment.

The protein localises to the membrane. This is an uncharacterized protein from Homo sapiens (Human).